The sequence spans 551 residues: MNADGRTRLHQTPEWAALVKHREQLGEVRLREMFAADPGRGTGWTLRVGDLHVDYSKHLVTDETLALLQELAAATGVSGLRDAMFRGERINITEDRAVLHTALRAPRDAVIEVDGENVVPQVHAVLDKMAGFADRVRTGEWTGHTGRRIRNVVNIGIGGSDLGPAMAYEALRAFTDRSLTLRFVSNVDGADLHEAVRDLDPAETLFIIASKTFTTIETITNATSARSWLLAGLGGDEKAVAKHFVALSTNAEKVADFGIDTANMFEFWDWVGGRYSFDSAIGLSLMIAIGPDRFREMLDGFHLVDEHFRTAPAESNVPLLMGLLGVWYGSFLGAQSHAVLPYSHYLSKFTAYLQQLDMESNGKSVDREGKPVQWQTGPVVWGTPGTNGQHAYYQLIHQGTKLIPADFIGFARPVDELSEELKSQHDLLMANFFAQTQALAFGKTPDEVRAEGVPEELVPHKTFPGDHPTTTILARELTPSVLGQLVALYEHKVFVQGAIWNIDSFDQWGVELGKVLAKRVEPALTEGADVPGLDPSTGALVAAYRELRGRR.

The active-site Proton donor is the E359. Active-site residues include H390 and K514.

This sequence belongs to the GPI family.

Its subcellular location is the cytoplasm. It catalyses the reaction alpha-D-glucose 6-phosphate = beta-D-fructose 6-phosphate. It participates in carbohydrate biosynthesis; gluconeogenesis. Its pathway is carbohydrate degradation; glycolysis; D-glyceraldehyde 3-phosphate and glycerone phosphate from D-glucose: step 2/4. In terms of biological role, catalyzes the reversible isomerization of glucose-6-phosphate to fructose-6-phosphate. The sequence is that of Glucose-6-phosphate isomerase 2 from Streptomyces coelicolor (strain ATCC BAA-471 / A3(2) / M145).